Reading from the N-terminus, the 499-residue chain is Rhamnogalacturonate lyase A (499 aa).

Residues 1 to 20 form the signal peptide; it reads MLSKTSLLSLLSLAAGVVNA. 2 disulfides stabilise this stretch: Cys-49-Cys-92 and Cys-183-Cys-192.

The protein belongs to the polysaccharide lyase 4 family.

The protein resides in the secreted. It catalyses the reaction Endotype eliminative cleavage of L-alpha-rhamnopyranosyl-(1-&gt;4)-alpha-D-galactopyranosyluronic acid bonds of rhamnogalacturonan I domains in ramified hairy regions of pectin leaving L-rhamnopyranose at the reducing end and 4-deoxy-4,5-unsaturated D-galactopyranosyluronic acid at the non-reducing end.. Pectinolytic enzymes consist of four classes of enzymes: pectin lyase, polygalacturonase, pectin methylesterase and rhamnogalacturonase. Degrades the rhamnogalacturonan I (RG-I) backbone of pectin. The protein is Rhamnogalacturonate lyase A (rglA) of Aspergillus niger.